Here is a 147-residue protein sequence, read N- to C-terminus: Ribonuclease VapC43 (147 aa).

One can recognise a PINc domain in the interval 3–139 (CVDVNVLVYA…ARFRRLRWRH (137 aa)). Residues Asp5 and Asp108 each contribute to the Mg(2+) site.

Belongs to the PINc/VapC protein family. It depends on Mg(2+) as a cofactor.

In terms of biological role, toxic component of a type II toxin-antitoxin (TA) system. An RNase. Its toxic effect is neutralized by coexpression with cognate antitoxin VapB43. The protein is Ribonuclease VapC43 of Mycobacterium tuberculosis (strain CDC 1551 / Oshkosh).